A 108-amino-acid polypeptide reads, in one-letter code: UPF0060 membrane protein CKO_01576 (108 aa).

The next 4 helical transmembrane spans lie at 6-26 (LLFFMTALCEIVGCFLPWLWL), 29-49 (GATAWLLVPAGVSLALFVWLL), 61-81 (AAYGGVYVCTALLWLRFVDGV), and 85-105 (LYDWSGALIALCGMLIIVAGW).

Belongs to the UPF0060 family.

It is found in the cell inner membrane. The protein is UPF0060 membrane protein CKO_01576 of Citrobacter koseri (strain ATCC BAA-895 / CDC 4225-83 / SGSC4696).